Here is a 536-residue protein sequence, read N- to C-terminus: Phosphoenolpyruvate carboxykinase (ATP) (536 aa).

Substrate-binding residues include arginine 61, tyrosine 195, and lysine 201. Residues lysine 201, histidine 220, and 236–244 each bind ATP; that span reads GLSGTGKTT. Positions 201 and 220 each coordinate Mn(2+). Aspartate 257 contributes to the Mn(2+) binding site. 3 residues coordinate ATP: glutamate 285, arginine 322, and threonine 447. Arginine 322 lines the substrate pocket.

Belongs to the phosphoenolpyruvate carboxykinase (ATP) family. Requires Mn(2+) as cofactor.

It is found in the cytoplasm. The enzyme catalyses oxaloacetate + ATP = phosphoenolpyruvate + ADP + CO2. Its pathway is carbohydrate biosynthesis; gluconeogenesis. Functionally, involved in the gluconeogenesis. Catalyzes the conversion of oxaloacetate (OAA) to phosphoenolpyruvate (PEP) through direct phosphoryl transfer between the nucleoside triphosphate and OAA. The polypeptide is Phosphoenolpyruvate carboxykinase (ATP) (Sinorhizobium fredii (strain NBRC 101917 / NGR234)).